A 335-amino-acid polypeptide reads, in one-letter code: Anthranilate phosphoribosyltransferase (335 aa).

Residues G79, 82-83, T87, 89-92, 107-115, and A119 contribute to the 5-phospho-alpha-D-ribose 1-diphosphate site; these read GD, NIST, and KHGNRSASS. An anthranilate-binding site is contributed by G79. S91 serves as a coordination point for Mg(2+). An anthranilate-binding site is contributed by N110. Anthranilate is bound at residue R165. Residues D224 and E225 each contribute to the Mg(2+) site.

Belongs to the anthranilate phosphoribosyltransferase family. As to quaternary structure, homodimer. Mg(2+) is required as a cofactor.

It catalyses the reaction N-(5-phospho-beta-D-ribosyl)anthranilate + diphosphate = 5-phospho-alpha-D-ribose 1-diphosphate + anthranilate. It functions in the pathway amino-acid biosynthesis; L-tryptophan biosynthesis; L-tryptophan from chorismate: step 2/5. Its function is as follows. Catalyzes the transfer of the phosphoribosyl group of 5-phosphorylribose-1-pyrophosphate (PRPP) to anthranilate to yield N-(5'-phosphoribosyl)-anthranilate (PRA). The polypeptide is Anthranilate phosphoribosyltransferase (Methanobrevibacter smithii (strain ATCC 35061 / DSM 861 / OCM 144 / PS)).